The primary structure comprises 431 residues: Ornithine decarboxylase (431 aa).

Lys-94 carries the post-translational modification N6-(pyridoxal phosphate)lysine. Residues Ser-226, Gly-264, and 297–300 (EPGR) contribute to the pyridoxal 5'-phosphate site. Residue 340–341 (YD) participates in substrate binding. The Proton donor; shared with dimeric partner role is filled by Cys-376. Asp-377 is a substrate binding site. Position 405 (Tyr-405) interacts with pyridoxal 5'-phosphate.

This sequence belongs to the Orn/Lys/Arg decarboxylase class-II family. Homodimer. Only the dimer is catalytically active, as the active sites are constructed of residues from both monomers. Pyridoxal 5'-phosphate serves as cofactor.

It catalyses the reaction L-ornithine + H(+) = putrescine + CO2. It participates in amine and polyamine biosynthesis; putrescine biosynthesis via L-ornithine pathway; putrescine from L-ornithine: step 1/1. Its activity is regulated as follows. Inhibited by antizyme (AZ) in response to polyamine levels. AZ inhibits the assembly of the functional homodimer by binding to ODC monomers and targeting them for ubiquitin-independent proteolytic destruction by the 26S proteasome. Its function is as follows. Catalyzes the first and rate-limiting step of polyamine biosynthesis that converts ornithine into putrescine, which is the precursor for the polyamines, spermidine and spermine. Polyamines are essential for cell proliferation and are implicated in cellular processes, ranging from DNA replication to apoptosis. This is Ornithine decarboxylase from Datura stramonium (Jimsonweed).